Consider the following 363-residue polypeptide: NAD(P)H-quinone oxidoreductase subunit 1, chloroplastic (363 aa).

The next 8 membrane-spanning stretches (helical) occupy residues 27 to 47 (LIPILIILLGATLGVLVIVWL), 93 to 113 (WLFSVGPALVVVPVFLSYLVV), 124 to 144 (LGVGILFWIALSSIAPLGLLM), 162 to 182 (AAQAISYEIPLALCVLSVALL), 200 to 220 (ILGWNIWRQPIGFIAFLIASL), 250 to 270 (FGLFYVGSYLNLLVSALFVSV), 303 to 323 (ATLGIAITLGKAYLFLFLSIL), and 343 to 363 (FLLPVSLGNLLLTASLQLALL).

Belongs to the complex I subunit 1 family. In terms of assembly, NDH is composed of at least 16 different subunits, 5 of which are encoded in the nucleus.

It localises to the plastid. The protein localises to the chloroplast thylakoid membrane. It catalyses the reaction a plastoquinone + NADH + (n+1) H(+)(in) = a plastoquinol + NAD(+) + n H(+)(out). The catalysed reaction is a plastoquinone + NADPH + (n+1) H(+)(in) = a plastoquinol + NADP(+) + n H(+)(out). Functionally, NDH shuttles electrons from NAD(P)H:plastoquinone, via FMN and iron-sulfur (Fe-S) centers, to quinones in the photosynthetic chain and possibly in a chloroplast respiratory chain. The immediate electron acceptor for the enzyme in this species is believed to be plastoquinone. Couples the redox reaction to proton translocation, and thus conserves the redox energy in a proton gradient. The sequence is that of NAD(P)H-quinone oxidoreductase subunit 1, chloroplastic from Chaetosphaeridium globosum (Charophycean green alga).